The primary structure comprises 158 residues: Transcription factor bHLH146 (158 aa).

Over residues 77 to 90 the composition is skewed to low complexity; the sequence is SSSSNPTTTTSSSS. A disordered region spans residues 77–110; it reads SSSSNPTTTTSSSSDGIRILERPDKEGGNEEGGI. The segment covering 94–110 has biased composition (basic and acidic residues); sequence RILERPDKEGGNEEGGI. The region spanning 94–143 is the bHLH; atypical domain; it reads RILERPDKEGGNEEGGIEERLRELKKLLPGGEEMNVEEMLSEIGNYIKCL.

Belongs to the bHLH protein family.

Its subcellular location is the nucleus. This Arabidopsis thaliana (Mouse-ear cress) protein is Transcription factor bHLH146 (BHLH146).